Reading from the N-terminus, the 246-residue chain is Ribonuclease PH (246 aa).

Residues arginine 91 and 129-131 (GTR) each bind phosphate.

It belongs to the RNase PH family. In terms of assembly, homohexameric ring arranged as a trimer of dimers.

It carries out the reaction tRNA(n+1) + phosphate = tRNA(n) + a ribonucleoside 5'-diphosphate. Phosphorolytic 3'-5' exoribonuclease that plays an important role in tRNA 3'-end maturation. Removes nucleotide residues following the 3'-CCA terminus of tRNAs; can also add nucleotides to the ends of RNA molecules by using nucleoside diphosphates as substrates, but this may not be physiologically important. Probably plays a role in initiation of 16S rRNA degradation (leading to ribosome degradation) during starvation. In Paraburkholderia phymatum (strain DSM 17167 / CIP 108236 / LMG 21445 / STM815) (Burkholderia phymatum), this protein is Ribonuclease PH.